The chain runs to 903 residues: MATSADSPSSPLGAEDLLSDSSEPPGLNQVSSEVTSQLYASLRLSRQAEATARAQLYLPSTSPPHEGLDGFAQELSRSLSVGLEKNLKKKDGSKHIFEMESVRGQLQTMLQTSRDTAYRDPLIPGAGSERREEDSFDSDSTATLLNTRPLQDLSPSSSAQALEELFPRYTSLRPGPPLNPPDFQGLRDALDSEHTRRKHCERHIQSLQTRVLELQQQLAVAVAADRKKDTMIEQLDKTLARVVEGWNRHEAERTEVLRGLQEEHQAAELTRSKQQETVTRLEQSLSEAMEALNREQESARLQQRERETLEEERQALTLRLEAEQQRCCVLQEERDAARAGQLSEHRELETLRAALEEERQTWAQQEHQLKEHYQALQEESQAQLEREKEKSQREAQAAWETQHQLALVQSEVRRLEGELDTARRERDALQLEMSLVQARYESQRIQLESELAVQLEQRVTERLAQAQESSLRQAASLREHHRKQLQDLSGQHQQELASQLAQFKVEMAEREERQQQVAEDYELRLAREQARVCELQSGNQQLEEQRVELVERLQAMLQAHWDEANQLLSTTLPPPNPPAPPAGPSSPGPQEPEKEERRVWTMPPMAVALKPVLQQSREARDELPGAPPVLCSSSSDLSLLLGPSFQSQHSFQPLEPKPDLTSSTAGAFSALGAFHPDHRAERPFPEEDPGPDGEGLLKQGLPPAQLEGLKNFLHQLLETVPQNNENPSVDLLPPKSGPLTVPSWEEAPQVPRIPPPVHKTKVPLAMASSLFRVPEPPSSHSQGSGPSSGSPERGGDGLTFPRQLMEVSQLLRLYQARGWGALPAEDLLLYLKRLEHSGTDGRGDNVPRRNTDSRLGEIPRKEIPSQAVPRRLATAPKTEKPPARKKSGHPAPSSMRSRGGVWR.

Residues 1–10 (MATSADSPSS) show a composition bias toward polar residues. The disordered stretch occupies residues 1–34 (MATSADSPSSPLGAEDLLSDSSEPPGLNQVSSEV). Ser-80 bears the Phosphoserine mark. 6 disordered regions span residues 110-140 (LQTS…DSDS), 471-493 (LRQA…GQHQ), 568-597 (LSTT…KEER), 669-704 (SALG…LPPA), 772-799 (RVPE…DGLT), and 837-903 (SGTD…GVWR). The stretch at 196-560 (RRKHCERHIQ…ERLQAMLQAH (365 aa)) forms a coiled coil. The tract at residues 365–903 (QEHQLKEHYQ…SMRSRGGVWR (539 aa)) is required for centrosome localization. Pro residues predominate over residues 572-590 (LPPPNPPAPPAGPSSPGPQ). Over residues 675–685 (HPDHRAERPFP) the composition is skewed to basic and acidic residues. Over residues 778–791 (SSHSQGSGPSSGSP) the composition is skewed to low complexity. Ser-790 is modified (phosphoserine). Residues 837 to 863 (SGTDGRGDNVPRRNTDSRLGEIPRKEI) are compositionally biased toward basic and acidic residues.

Interacts with LYST. In terms of tissue distribution, widely expressed (at protein level). Highly expressed in testis. Also expressed in spleen, thymus, prostate, small intestine, colon and peripheral blood leukocytes.

The protein localises to the cytoplasm. It is found in the cytoskeleton. It localises to the microtubule organizing center. The protein resides in the centrosome. Its subcellular location is the centriole. Functionally, required for centriole duplication. Inhibition of centriole duplication leading to defects in cytokinesis. In Homo sapiens (Human), this protein is Centrobin (CNTROB).